The primary structure comprises 265 residues: Tryptophan 2,3-dioxygenase (265 aa).

Substrate contacts are provided by residues 38–42 and Arg-104; that span reads FIVVH. Residue His-223 participates in heme binding. Residue Thr-237 coordinates substrate.

It belongs to the tryptophan 2,3-dioxygenase family. In terms of assembly, homotetramer. The cofactor is heme.

The catalysed reaction is L-tryptophan + O2 = N-formyl-L-kynurenine. It participates in amino-acid degradation; L-tryptophan degradation via kynurenine pathway; L-kynurenine from L-tryptophan: step 1/2. In terms of biological role, heme-dependent dioxygenase that catalyzes the oxidative cleavage of the L-tryptophan (L-Trp) pyrrole ring and converts L-tryptophan to N-formyl-L-kynurenine. Catalyzes the oxidative cleavage of the indole moiety. The protein is Tryptophan 2,3-dioxygenase of Anaeromyxobacter dehalogenans (strain 2CP-C).